Here is a 184-residue protein sequence, read N- to C-terminus: Probable archaeosortase E (184 aa).

Helical transmembrane passes span 27-47 (ILFL…LSYF), 86-106 (VVEE…IIVY), 114-134 (IIGI…IVLI), and 151-171 (IAGY…YLKI). The active-site Acyl-thioester intermediate is C90. Catalysis depends on R130, which acts as the Proton donor.

This sequence belongs to the exosortase/archaeosortase family. Archaeosortase E subfamily.

It localises to the cell membrane. Transpeptidase that recognizes and modifies its substrate by proteolytic cleavage of a sorting signal. Following cleavage, a covalent intermediate is formed via a thioester bond between the archaeosortase and its substrate, which is then transferred and covalently attached to the cell membrane. The sequence is that of Probable archaeosortase E from Methanocaldococcus jannaschii (strain ATCC 43067 / DSM 2661 / JAL-1 / JCM 10045 / NBRC 100440) (Methanococcus jannaschii).